Reading from the N-terminus, the 226-residue chain is PtdIns3K complex I subunit atg38 (226 aa).

S2 bears the N-acetylserine mark. 2 coiled-coil regions span residues 52 to 85 and 182 to 209; these read DVTQ…ENNI and FKEY…LRER.

It belongs to the ATG38 family. Homodimer. Component of the autophagy-specific VPS34 PI3-kinase complex I composed of VPS15, VPS30, VPS34, ATG14 and an ATG38 homodimer. Interacts directly with ATG14 and VPS34.

Its subcellular location is the cytoplasm. It is found in the preautophagosomal structure membrane. In terms of biological role, autophagy-related protein required for cytoplasm to vacuole transport (Cvt) and autophagy as a part of the autophagy-specific VPS34 PI3-kinase complex I. This complex is essential to recruit the ATG8-phosphatidylinositol conjugate and the ATG12-ATG5 conjugate to the pre-autophagosomal structure. ATG38 is required for the integrity of the active PI3-kinase complex I by maintaining an association between VPS15-VPS34 and ATG14-VPS30 subcomplexes. This Saccharomyces cerevisiae (strain ATCC 204508 / S288c) (Baker's yeast) protein is PtdIns3K complex I subunit atg38.